Here is a 290-residue protein sequence, read N- to C-terminus: MADHSEVDSVSGTATTGHAWDGIKELNTPLPRWWVITFYITIVWAIGYWIVYPAWPTITSNTKGLFGYSSRADVAVELANLEKIRGDKMAALATASLADIEKDPQMLALARAKGKTVFGDNCAACHGTGAAGAKGFPNLNDDDWLWGGSLEQIQQTLLYGVRSGHPKTREGQMLAFGKDGTLKPAEIITVANYVRSLSGLPTRQGYDAAAGAKIFAENCVACHGDNAKGNPEVGAPNLTDKIWLYGSDEATLIETITNGRAGVMPAWEGRLDPTTIKAMAVYVHSLGGGK.

The chain crosses the membrane as a helical span at residues W33 to P53. Cytochrome c domains lie at L109–S198 and Y206–G287. The heme c site is built by C122, C125, H126, M173, C219, C222, H223, and M264.

Belongs to the CcoP / FixP family. As to quaternary structure, component of the cbb3-type cytochrome c oxidase at least composed of FixN, FixO, FixQ and FixP. The cofactor is heme c.

The protein localises to the cell inner membrane. It functions in the pathway energy metabolism; oxidative phosphorylation. Its function is as follows. C-type cytochrome. Part of the cbb3-type cytochrome c oxidase complex. FixP subunit is required for transferring electrons from donor cytochrome c via its heme groups to FixO subunit. From there, electrons are shuttled to the catalytic binuclear center of FixN subunit where oxygen reduction takes place. The complex also functions as a proton pump. This chain is Cbb3-type cytochrome c oxidase subunit FixP, found in Bradyrhizobium sp. (strain ORS 278).